The sequence spans 205 residues: GTP cyclohydrolase-2 (205 aa).

49–53 (RLHSE) lines the GTP pocket. Zn(2+) is bound by residues Cys54, Cys65, and Cys67. Residues Gln70, 92–94 (EGR), and Thr114 contribute to the GTP site. Residue Asp126 is the Proton acceptor of the active site. The active-site Nucleophile is the Arg128. GTP contacts are provided by Thr149 and Lys154.

Belongs to the GTP cyclohydrolase II family. Zn(2+) is required as a cofactor.

It catalyses the reaction GTP + 4 H2O = 2,5-diamino-6-hydroxy-4-(5-phosphoribosylamino)-pyrimidine + formate + 2 phosphate + 3 H(+). It participates in cofactor biosynthesis; riboflavin biosynthesis; 5-amino-6-(D-ribitylamino)uracil from GTP: step 1/4. In terms of biological role, catalyzes the conversion of GTP to 2,5-diamino-6-ribosylamino-4(3H)-pyrimidinone 5'-phosphate (DARP), formate and pyrophosphate. The protein is GTP cyclohydrolase-2 of Pseudomonas aeruginosa (strain UCBPP-PA14).